Consider the following 317-residue polypeptide: Inositol oxygenase 2 (317 aa).

Residues arginine 57 and 115–117 contribute to the substrate site; that span reads DES. Fe cation is bound by residues histidine 128, histidine 153, and aspartate 154. Substrate is bound by residues lysine 157 and 174–175; that span reads GD. The Fe cation site is built by histidine 226, histidine 252, and aspartate 285. 252 to 253 lines the substrate pocket; sequence HS.

Belongs to the myo-inositol oxygenase family. Fe cation serves as cofactor. Expressed mainly in roots, stems, flowers and siliques. Low expression in leaves.

The protein resides in the cytoplasm. The catalysed reaction is myo-inositol + O2 = D-glucuronate + H2O + H(+). It functions in the pathway polyol metabolism; myo-inositol degradation into D-glucuronate; D-glucuronate from myo-inositol: step 1/1. Involved in the biosynthesis of UDP-glucuronic acid (UDP-GlcA), providing nucleotide sugars for cell-wall polymers. May be also involved in plant ascorbate biosynthesis. This is Inositol oxygenase 2 (MIOX2) from Arabidopsis thaliana (Mouse-ear cress).